The chain runs to 460 residues: tRNA hydroxylation protein P (460 aa).

Belongs to the peptidase U32 family.

Involved in prephenate-dependent formation of 5-hydroxyuridine (ho5U) modification at position 34 in tRNAs, the first step in 5-carboxymethoxyuridine (cmo5U) biosynthesis. This chain is tRNA hydroxylation protein P, found in Haemophilus influenzae (strain ATCC 51907 / DSM 11121 / KW20 / Rd).